Consider the following 321-residue polypeptide: LIMR family protein SELMODRAFT_432210 (321 aa).

Helical transmembrane passes span 28–48, 116–133, 139–159, 240–260, and 284–304; these read KQLW…VIPF, CFSL…LDLW, LCVF…FGGV, LVFG…ILVF, and LLGT…VISG.

It belongs to the LIMR family.

The protein resides in the membrane. This Selaginella moellendorffii (Spikemoss) protein is LIMR family protein SELMODRAFT_432210.